The following is a 1355-amino-acid chain: Probable aldehyde oxidase 2 (1355 aa).

A 2Fe-2S ferredoxin-type domain is found at 9–96 (RPVVVTVNGE…HCAVTTSEGI (88 aa)). Positions 48, 53, 56, and 78 each coordinate [2Fe-2S] cluster. In terms of domain architecture, FAD-binding PCMH-type spans 244–422 (VAVTGDGWFH…VSISIPDWGS (179 aa)). The disordered stretch occupies residues 544–577 (PENANVPNGSCTNGTANGSANSSPEKHSNVDSSD). The span at 548–566 (NVPNGSCTNGTANGSANSS) shows a compositional bias: polar residues.

Belongs to the xanthine dehydrogenase family. As to quaternary structure, aldehyde oxidases (AO) are homodimers and heterodimers of AO subunits. The cofactor is [2Fe-2S] cluster. FAD serves as cofactor. Mo-molybdopterin is required as a cofactor.

It carries out the reaction an aldehyde + O2 + H2O = a carboxylate + H2O2 + H(+). In Oryza sativa subsp. japonica (Rice), this protein is Probable aldehyde oxidase 2.